Here is a 449-residue protein sequence, read N- to C-terminus: Asparagine--tRNA ligase (449 aa).

The protein belongs to the class-II aminoacyl-tRNA synthetase family. In terms of assembly, homodimer.

The protein localises to the cytoplasm. The enzyme catalyses tRNA(Asn) + L-asparagine + ATP = L-asparaginyl-tRNA(Asn) + AMP + diphosphate + H(+). This Mesomycoplasma hyopneumoniae (strain J / ATCC 25934 / NCTC 10110) (Mycoplasma hyopneumoniae) protein is Asparagine--tRNA ligase.